A 156-amino-acid polypeptide reads, in one-letter code: Small ribosomal subunit protein uS7 (156 aa).

It belongs to the universal ribosomal protein uS7 family. In terms of assembly, part of the 30S ribosomal subunit. Contacts proteins S9 and S11.

Functionally, one of the primary rRNA binding proteins, it binds directly to 16S rRNA where it nucleates assembly of the head domain of the 30S subunit. Is located at the subunit interface close to the decoding center, probably blocks exit of the E-site tRNA. This Mycobacterium leprae (strain TN) protein is Small ribosomal subunit protein uS7.